The following is a 51-amino-acid chain: Mating pheromone Er-23 (51 aa).

Cystine bridges form between Cys3–Cys24, Cys6–Cys16, Cys13–Cys47, Cys27–Cys40, and Cys35–Cys51.

The protein localises to the secreted. Mating ciliate pheromones (or gamones) are diffusible extracellular communication signals that distinguish different intraspecific classes of cells commonly referred to as 'mating types'. They prepare the latter for conjugation by changing their cell surface properties. This is Mating pheromone Er-23 (MAT23) from Euplotes raikovi.